The sequence spans 229 residues: Protein ras-2 (229 aa).

15–22 (GDGGVGKT) contacts GTP. Positions 37–45 (YDPTIEDSY) match the Effector region motif. Residue 62–66 (DTAGQ) coordinates GTP. The segment at 109-132 (KESTSSPSAYPGSSPLAATNPSAP) is disordered. The segment covering 111-126 (STSSPSAYPGSSPLAA) has biased composition (low complexity). 140–143 (NKSD) is a binding site for GTP. The tract at residues 188–229 (LRKQRQQGQSTPRALPPSGNSKSEKYSGTEKPKRPRGKCLII) is disordered. Residues 209–219 (KSEKYSGTEKP) are compositionally biased toward basic and acidic residues. A compositionally biased stretch (basic residues) spans 220–229 (KRPRGKCLII). C226 carries the cysteine methyl ester modification. C226 is lipidated: S-farnesyl cysteine. The propeptide at 227-229 (LII) is removed in mature form.

This sequence belongs to the small GTPase superfamily. Ras family.

The protein localises to the cell membrane. The enzyme catalyses GTP + H2O = GDP + phosphate + H(+). Its function is as follows. Ras proteins bind GDP/GTP and possess intrinsic GTPase activity. The chain is Protein ras-2 (ras-2) from Neurospora crassa (strain ATCC 24698 / 74-OR23-1A / CBS 708.71 / DSM 1257 / FGSC 987).